We begin with the raw amino-acid sequence, 83 residues long: High-potential iron-sulfur protein (83 aa).

4 residues coordinate [4Fe-4S] cluster: Cys-43, Cys-46, Cys-61, and Cys-75.

It belongs to the high-potential iron-sulfur protein (HiPIP) family. In terms of assembly, homodimer.

Its function is as follows. Specific class of high-redox-potential 4Fe-4S ferredoxins. Functions in anaerobic electron transport in most purple and in some other photosynthetic bacteria and in at least one genus (Paracoccus) of halophilic, denitrifying bacteria. In Thermochromatium tepidum (Chromatium tepidum), this protein is High-potential iron-sulfur protein (hip).